We begin with the raw amino-acid sequence, 431 residues long: Histidinol dehydrogenase (431 aa).

Positions 130, 191, and 214 each coordinate NAD(+). Substrate-binding residues include Ser-237, Gln-259, and His-262. Positions 259 and 262 each coordinate Zn(2+). Residues Glu-327 and His-328 each act as proton acceptor in the active site. Substrate-binding residues include His-328, Asp-361, Glu-415, and His-420. Asp-361 is a binding site for Zn(2+). His-420 provides a ligand contact to Zn(2+).

This sequence belongs to the histidinol dehydrogenase family. It depends on Zn(2+) as a cofactor.

It catalyses the reaction L-histidinol + 2 NAD(+) + H2O = L-histidine + 2 NADH + 3 H(+). It participates in amino-acid biosynthesis; L-histidine biosynthesis; L-histidine from 5-phospho-alpha-D-ribose 1-diphosphate: step 9/9. Functionally, catalyzes the sequential NAD-dependent oxidations of L-histidinol to L-histidinaldehyde and then to L-histidine. The chain is Histidinol dehydrogenase from Bradyrhizobium diazoefficiens (strain JCM 10833 / BCRC 13528 / IAM 13628 / NBRC 14792 / USDA 110).